The primary structure comprises 417 residues: METSTQTKAGSLTIVGTGIESIGQMTLQALSYIEAAAKVFYCVIDPATEAFILTKNKNCVDLYQYYDNGKSRLNTYTQMSELMVREVRKGLDVVGVFYGHPGVFVNPSHRALAIAKSEGYRARMLPGVSAEDCLFADLCIDPSNPGCLTYEASDFLIRDRPVSIHSHLVLFQVGCVGIADFNFTGFDNNKFGVLVDRLEQEYGAEHPVVHYIAAMMPHQDPVTDKYTVAQLREPEIAKRVGGVSTFYIPPKARKASNLDIIRRLELLPAGQVPDKKARIYPANQWEPDVPEVEPYRPSDQAAIAQLADHAPPEQYQPLATSKAMSDVMTKLALDPKALADYKADHRAFAQSVPDLTPQERAALELGDSWAIRCAMKNMPSSLLDAARESGEEASQNGFPWVIVVGVIGVIGSVMSTE.

The interval 1 to 251 (METSTQTKAG…GVSTFYIPPK (251 aa)) is methyltransferase domain. Active-site residues include Arg72, Tyr76, and Tyr98. Positions 98, 100, 103, 130, 172, 213, 244, and 245 each coordinate S-adenosyl-L-methionine. Positions 252–378 (ARKASNLDII…WAIRCAMKNM (127 aa)) are clasp domain. Positions 379–399 (PSSLLDAARESGEEASQNGFP) are precursor leader. An N-methylvaline mark is found at Val401, Val403, and Val404. Residue Gly405 is modified to N-methylglycine. Val406 is subject to N-methylvaline. Ile407 is subject to N-methylisoleucine. Gly408 carries the post-translational modification N-methylglycine. Residue Ile410 is modified to N-methylisoleucine. The residue at position 411 (Gly411) is an N-methylglycine. Val413 carries the post-translational modification N-methylvaline.

The protein in the N-terminal section; belongs to the precorrin methyltransferase family. Homodimer. In terms of processing, ophMA automethylates at Val-401, Val-403, Val-404, Gly-405, Val-406, Ile-407, Gly-408, Ile-410, Gly-411 and Val-413 before being processed by the prolyloligopeptidase ophP which likely forms a peptidyl ester upon removal of the follower propeptide, which then undergoes macrocyclization with the N-terminus of the modified core peptide. Peptide backbone alpha-N-methylations change the physicochemical properties of amide bonds to provide structural constraints and other favorable characteristics including biological membrane permeability to peptides.

The protein operates within mycotoxin biosynthesis. In terms of biological role, fusion protein of the methyltransferase ophM and the omphalotin core peptide; part of the gene cluster that mediates the biosynthesis of omphalotin A, a highly methylated cyclic dodecapeptide with nematodicidal activity. Omphalotin A derives from the C-terminus of the ophMA protein, and it is the ophMA protein that methylates its own C-terminus using S-adenosyl methionine (SAM). The C-terminus is subsequently cleaved off and macrocyclized by the prolyloligopeptidase ophP to give the final product. The chain is Methyltransferase/ribosomally synthesized cyclic peptide omphalotin A precursor ophMA from Omphalotus olearius (Jack o'lantern).